The sequence spans 104 residues: Ig kappa chain b5 variant C region (104 aa).

An Ig-like domain is found at 5-100; sequence PTVLIFPPSP…SGSPVVQSFS (96 aa). C26 and C85 are oxidised to a cystine.

The chain is Ig kappa chain b5 variant C region from Oryctolagus cuniculus (Rabbit).